We begin with the raw amino-acid sequence, 479 residues long: Sulfate adenylyltransferase subunit 1 (479 aa).

In terms of domain architecture, tr-type G spans Lys-25–Arg-239. The G1 stretch occupies residues Gly-34–Ser-41. Gly-34 to Ser-41 serves as a coordination point for GTP. Positions Gly-92–Asp-96 are G2. Residues Asp-113 to Gly-116 are G3. Residues Asp-113–His-117 and Asn-168–Asp-171 contribute to the GTP site. Positions Asn-168–Asp-171 are G4. The tract at residues Ser-206–Leu-208 is G5.

It belongs to the TRAFAC class translation factor GTPase superfamily. Classic translation factor GTPase family. CysN/NodQ subfamily. As to quaternary structure, heterodimer composed of CysD, the smaller subunit, and CysN.

It catalyses the reaction sulfate + ATP + H(+) = adenosine 5'-phosphosulfate + diphosphate. Its pathway is sulfur metabolism; hydrogen sulfide biosynthesis; sulfite from sulfate: step 1/3. Functionally, with CysD forms the ATP sulfurylase (ATPS) that catalyzes the adenylation of sulfate producing adenosine 5'-phosphosulfate (APS) and diphosphate, the first enzymatic step in sulfur assimilation pathway. APS synthesis involves the formation of a high-energy phosphoric-sulfuric acid anhydride bond driven by GTP hydrolysis by CysN coupled to ATP hydrolysis by CysD. This is Sulfate adenylyltransferase subunit 1 from Salmonella paratyphi A (strain ATCC 9150 / SARB42).